The following is a 553-amino-acid chain: Methyl-coenzyme M reductase subunit alpha (553 aa).

Position 151 (Q151) interacts with coenzyme F430. Residues R229, K260–H261, and R274 contribute to the coenzyme B site. Positions 336 and 447 each coordinate coenzyme M.

This sequence belongs to the methyl-coenzyme M reductase alpha subunit family. As to quaternary structure, MCR is a hexamer of two alpha, two beta, and two gamma chains, forming a dimer of heterotrimers. It depends on coenzyme F430 as a cofactor.

It is found in the cytoplasm. The enzyme catalyses coenzyme B + methyl-coenzyme M = methane + coenzyme M-coenzyme B heterodisulfide. Its pathway is one-carbon metabolism; methyl-coenzyme M reduction; methane from methyl-coenzyme M: step 1/1. Component of the methyl-coenzyme M reductase (MCR) I that catalyzes the reductive cleavage of methyl-coenzyme M (CoM-S-CH3 or 2-(methylthio)ethanesulfonate) using coenzyme B (CoB or 7-mercaptoheptanoylthreonine phosphate) as reductant which results in the production of methane and the mixed heterodisulfide of CoB and CoM (CoM-S-S-CoB). This is the final step in methanogenesis. The polypeptide is Methyl-coenzyme M reductase subunit alpha (mcrA) (Methanococcus vannielii).